The primary structure comprises 173 residues: Small ribosomal subunit protein uS5 (173 aa).

The region spanning 16–79 (LSELLVSVRR…NAAKKNMIRV (64 aa)) is the S5 DRBM domain.

The protein belongs to the universal ribosomal protein uS5 family. In terms of assembly, part of the 30S ribosomal subunit. Contacts proteins S4 and S8.

In terms of biological role, with S4 and S12 plays an important role in translational accuracy. Its function is as follows. Located at the back of the 30S subunit body where it stabilizes the conformation of the head with respect to the body. The chain is Small ribosomal subunit protein uS5 from Anaplasma phagocytophilum (strain HZ).